A 227-amino-acid chain; its full sequence is Glutathione S-transferase U27 (227 aa).

The 81-residue stretch at 4–84 (EEVVVLNFWP…YIDEVWKDDK (81 aa)) folds into the GST N-terminal domain. Residues 14 to 15 (SM), 41 to 42 (QK), 55 to 56 (KI), and 68 to 69 (ES) contribute to the glutathione site. One can recognise a GST C-terminal domain in the interval 92–217 (DPYQKSQCRF…LKIFDRVTQI (126 aa)).

The protein belongs to the GST superfamily. Tau family.

The protein resides in the cytoplasm. It is found in the cytosol. The enzyme catalyses RX + glutathione = an S-substituted glutathione + a halide anion + H(+). In terms of biological role, may be involved in the conjugation of reduced glutathione to a wide number of exogenous and endogenous hydrophobic electrophiles and have a detoxification role against certain herbicides. In Arabidopsis thaliana (Mouse-ear cress), this protein is Glutathione S-transferase U27 (GSTU27).